Here is a 476-residue protein sequence, read N- to C-terminus: Nyctalopin (476 aa).

A signal peptide spans 1–18 (MLVLLLHAVVLGLPSAWA). LRR repeat units follow at residues 60–84 (VSID…PSLR), 85–108 (RLSL…PRLA), 110–133 (LRLA…SRLR), 134–157 (RLDL…PALR), 159–181 (LAAF…NLTH), 182–204 (AHLE…RRLR), 205–228 (SLSL…GVLE), 229–252 (HLLL…RRLR), 254–276 (LNLG…AELE), 277–300 (LLYL…SGLL), and 302–324 (LHLN…FFLG). Asn92 carries N-linked (GlcNAc...) asparagine glycosylation. N-linked (GlcNAc...) asparagine glycosylation occurs at Asn178. Asn295 carries an N-linked (GlcNAc...) asparagine glycan. The region spanning 336–387 (DCRLEWLRDWMEGSGRVTDVPCASPGSVAGLDLSQVTFGRSSDGLCVDPEEL) is the LRRCT domain. N-linked (GlcNAc...) asparagine glycans are attached at residues Asn388, Asn427, and Asn434.

It belongs to the small leucine-rich proteoglycan (SLRP) family. SLRP class IV subfamily. As to expression, expressed in kidney and retina. Also at low levels in brain, testis and muscle. Within the retina, expressed in the inner segment of photoreceptors, outer and inner nuclear layers and the ganglion cell layer.

The protein localises to the secreted. The protein resides in the extracellular space. It is found in the extracellular matrix. The chain is Nyctalopin (NYX) from Homo sapiens (Human).